The chain runs to 141 residues: Large ribosomal subunit protein uL11 (141 aa).

It belongs to the universal ribosomal protein uL11 family. Part of the ribosomal stalk of the 50S ribosomal subunit. Interacts with L10 and the large rRNA to form the base of the stalk. L10 forms an elongated spine to which L12 dimers bind in a sequential fashion forming a multimeric L10(L12)X complex. In terms of processing, one or more lysine residues are methylated.

In terms of biological role, forms part of the ribosomal stalk which helps the ribosome interact with GTP-bound translation factors. This chain is Large ribosomal subunit protein uL11, found in Chlorobium phaeovibrioides (strain DSM 265 / 1930) (Prosthecochloris vibrioformis (strain DSM 265)).